A 230-amino-acid polypeptide reads, in one-letter code: Orotidine 5'-phosphate decarboxylase (230 aa).

Substrate contacts are provided by residues Asp16, Lys38, 65–74 (DLKLHDIGNT), Thr119, Arg180, Gln189, Gly209, and Arg210. The active-site Proton donor is the Lys67.

Belongs to the OMP decarboxylase family. Type 1 subfamily. Homodimer.

It catalyses the reaction orotidine 5'-phosphate + H(+) = UMP + CO2. It functions in the pathway pyrimidine metabolism; UMP biosynthesis via de novo pathway; UMP from orotate: step 2/2. Catalyzes the decarboxylation of orotidine 5'-monophosphate (OMP) to uridine 5'-monophosphate (UMP). The protein is Orotidine 5'-phosphate decarboxylase of Methylobacterium radiotolerans (strain ATCC 27329 / DSM 1819 / JCM 2831 / NBRC 15690 / NCIMB 10815 / 0-1).